Reading from the N-terminus, the 544-residue chain is Chaperonin GroEL (544 aa).

Residues 30-33, Lys-51, 87-91, Gly-415, 481-483, and Asp-497 contribute to the ATP site; these read TLGP, DGTTT, and DAL.

This sequence belongs to the chaperonin (HSP60) family. As to quaternary structure, forms a cylinder of 14 subunits composed of two heptameric rings stacked back-to-back. Interacts with the co-chaperonin GroES.

The protein localises to the cytoplasm. It catalyses the reaction ATP + H2O + a folded polypeptide = ADP + phosphate + an unfolded polypeptide.. Its function is as follows. Together with its co-chaperonin GroES, plays an essential role in assisting protein folding. The GroEL-GroES system forms a nano-cage that allows encapsulation of the non-native substrate proteins and provides a physical environment optimized to promote and accelerate protein folding. This chain is Chaperonin GroEL, found in Chlamydia trachomatis serovar D (strain ATCC VR-885 / DSM 19411 / UW-3/Cx).